Consider the following 64-residue polypeptide: Crotamine CRO3 (64 aa).

Residues 1–22 (MILYLLFAFLFLAFLSEPGNAY) form the signal peptide. 3 cysteine pairs are disulfide-bonded: C25-C57, C32-C51, and C39-C58.

Belongs to the crotamine-myotoxin family. Monomer. As to expression, expressed by the venom gland.

The protein localises to the secreted. Its function is as follows. Cationic peptide that possesses multiple functions. It acts as a cell-penetrating peptide (CPP), and as a potent voltage-gated potassium channel (Kv) inhibitor. It exhibits antimicrobial activities, hind limb paralysis, and severe muscle necrosis by a non-enzymatic mechanism. The sequence is that of Crotamine CRO3 (CRO3) from Crotalus durissus terrificus (South American rattlesnake).